The sequence spans 279 residues: Orotidine 5'-phosphate decarboxylase (279 aa).

Residues Asp8, Lys30, Asp58–Thr67, Thr117, Arg177, Gln186, Gly206, and Arg207 each bind substrate. Lys60 (proton donor) is an active-site residue.

It belongs to the OMP decarboxylase family. Type 1 subfamily. In terms of assembly, homodimer.

The enzyme catalyses orotidine 5'-phosphate + H(+) = UMP + CO2. It functions in the pathway pyrimidine metabolism; UMP biosynthesis via de novo pathway; UMP from orotate: step 2/2. Its function is as follows. Catalyzes the decarboxylation of orotidine 5'-monophosphate (OMP) to uridine 5'-monophosphate (UMP). The sequence is that of Orotidine 5'-phosphate decarboxylase from Campylobacter jejuni subsp. jejuni serotype O:2 (strain ATCC 700819 / NCTC 11168).